The sequence spans 211 residues: MYQPEFPPVPFRLGLYPVVDSVQWIERLLDAGVRTLQLRIKDRRDEEVEADVVAAIALGRRYNARLFINDYWRLAIKHQAYGVHLGQEDLQATDLSAIRAAGLRLGVSTHDDMEIDVALAARPSYIALGHVFPTQTKQMPSAPQGLEQLARHVERLADYPTVAIGGISLARAPAVIATGVGSIAVVSAITQAADWRLATAQLLEIAGVGDE.

Residues 37–41 (QLRIK) and asparagine 69 each bind 4-amino-2-methyl-5-(diphosphooxymethyl)pyrimidine. Aspartate 70 and aspartate 89 together coordinate Mg(2+). Serine 108 contacts 4-amino-2-methyl-5-(diphosphooxymethyl)pyrimidine. 134–136 (TQT) lines the 2-[(2R,5Z)-2-carboxy-4-methylthiazol-5(2H)-ylidene]ethyl phosphate pocket. Residue lysine 137 participates in 4-amino-2-methyl-5-(diphosphooxymethyl)pyrimidine binding. 2-[(2R,5Z)-2-carboxy-4-methylthiazol-5(2H)-ylidene]ethyl phosphate contacts are provided by residues glycine 166 and 186–187 (VS).

The protein belongs to the thiamine-phosphate synthase family. The cofactor is Mg(2+).

It catalyses the reaction 2-[(2R,5Z)-2-carboxy-4-methylthiazol-5(2H)-ylidene]ethyl phosphate + 4-amino-2-methyl-5-(diphosphooxymethyl)pyrimidine + 2 H(+) = thiamine phosphate + CO2 + diphosphate. It carries out the reaction 2-(2-carboxy-4-methylthiazol-5-yl)ethyl phosphate + 4-amino-2-methyl-5-(diphosphooxymethyl)pyrimidine + 2 H(+) = thiamine phosphate + CO2 + diphosphate. The catalysed reaction is 4-methyl-5-(2-phosphooxyethyl)-thiazole + 4-amino-2-methyl-5-(diphosphooxymethyl)pyrimidine + H(+) = thiamine phosphate + diphosphate. It participates in cofactor biosynthesis; thiamine diphosphate biosynthesis; thiamine phosphate from 4-amino-2-methyl-5-diphosphomethylpyrimidine and 4-methyl-5-(2-phosphoethyl)-thiazole: step 1/1. Functionally, condenses 4-methyl-5-(beta-hydroxyethyl)thiazole monophosphate (THZ-P) and 2-methyl-4-amino-5-hydroxymethyl pyrimidine pyrophosphate (HMP-PP) to form thiamine monophosphate (TMP). The polypeptide is Thiamine-phosphate synthase (Escherichia coli O1:K1 / APEC).